Consider the following 570-residue polypeptide: Periplasmic trehalase (570 aa).

The first 34 residues, 1–34 (MIPPEIRRSVLLQKAIKLALAGTLLTFASFSATA), serve as a signal peptide directing secretion. Substrate contacts are provided by residues arginine 159, 166–167 (WD), asparagine 203, 212–214 (RSQ), 284–286 (RPE), and glycine 317. Active-site proton donor/acceptor residues include aspartate 319 and glutamate 503. Glutamate 518 is a binding site for substrate. Residues 544-570 (KPCDSVPSTRPASLSATPTKTPSAATQ) form a disordered region. Residues 554–570 (PASLSATPTKTPSAATQ) show a composition bias toward low complexity.

It belongs to the glycosyl hydrolase 37 family. In terms of assembly, monomer.

Its subcellular location is the periplasm. The catalysed reaction is alpha,alpha-trehalose + H2O = alpha-D-glucose + beta-D-glucose. In terms of biological role, provides the cells with the ability to utilize trehalose at high osmolarity by splitting it into glucose molecules that can subsequently be taken up by the phosphotransferase-mediated uptake system. The sequence is that of Periplasmic trehalase from Salmonella choleraesuis (strain SC-B67).